We begin with the raw amino-acid sequence, 426 residues long: Histidine--tRNA ligase (426 aa).

Belongs to the class-II aminoacyl-tRNA synthetase family. In terms of assembly, homodimer.

It is found in the cytoplasm. The enzyme catalyses tRNA(His) + L-histidine + ATP = L-histidyl-tRNA(His) + AMP + diphosphate + H(+). This Streptococcus dysgalactiae subsp. equisimilis (Streptococcus equisimilis) protein is Histidine--tRNA ligase (hisS).